We begin with the raw amino-acid sequence, 184 residues long: Probable N-acetyltransferase san (184 aa).

Residues 6–155 (IELGDVTPHN…DAHVLQKTLR (150 aa)) enclose the N-acetyltransferase domain. Tyrosine 31 contacts substrate. N6-acetyllysine; by autocatalysis is present on lysine 47. Tyrosine 73 is an active-site residue. Substrate is bound at residue methionine 75. 77-90 (LGCLSPYRRLGIGT) lines the acetyl-CoA pocket. The active site involves histidine 112. 117-126 (NNGAIEFYKK) contacts CoA. The interval 138-141 (YYKR) is substrate. A compositionally biased stretch (low complexity) spans 157 to 174 (TAPNSNSTATSTTANSNS). A disordered region spans residues 157 to 176 (TAPNSNSTATSTTANSNSRS).

It belongs to the acetyltransferase family. In terms of assembly, component of an acetyltransferase complex, at least composed of san, Ard1 and Nat1. In terms of processing, autoacetylated.

It is found in the cytoplasm. The catalysed reaction is N-terminal L-methionyl-L-alanyl-[protein] + acetyl-CoA = N-terminal N(alpha)-acetyl-L-methionyl-L-alanyl-[protein] + CoA + H(+). The enzyme catalyses N-terminal L-methionyl-L-seryl-[protein] + acetyl-CoA = N-terminal N(alpha)-acetyl-L-methionyl-L-seryl-[protein] + CoA + H(+). It carries out the reaction N-terminal L-methionyl-L-valyl-[protein] + acetyl-CoA = N-terminal N(alpha)-acetyl-L-methionyl-L-valyl-[protein] + CoA + H(+). It catalyses the reaction N-terminal L-methionyl-L-threonyl-[protein] + acetyl-CoA = N-terminal N(alpha)-acetyl-L-methionyl-L-threonyl-[protein] + CoA + H(+). The catalysed reaction is N-terminal L-methionyl-L-lysyl-[protein] + acetyl-CoA = N-terminal N(alpha)-acetyl-L-methionyl-L-lysyl-[protein] + CoA + H(+). The enzyme catalyses N-terminal L-methionyl-L-leucyl-[protein] + acetyl-CoA = N-terminal N(alpha)-acetyl-L-methionyl-L-leucyl-[protein] + CoA + H(+). It carries out the reaction N-terminal L-methionyl-L-phenylalanyl-[protein] + acetyl-CoA = N-terminal N(alpha)-acetyl-L-methionyl-L-phenylalanyl-[protein] + CoA + H(+). It catalyses the reaction N-terminal L-methionyl-L-tyrosyl-[protein] + acetyl-CoA = N-terminal N(alpha)-acetyl-L-methionyl-L-tyrosyl-[protein] + CoA + H(+). In terms of biological role, N-alpha-acetyltransferase that acetylates the N-terminus of proteins that retain their initiating methionine. Has a broad substrate specificity: able to acetylate the initiator methionine of most peptides. Also displays N-epsilon-acetyltransferase activity by mediating acetylation of the side chain of specific lysines on proteins. Autoacetylates. Required for the establishment of sister chromatid cohesion and couple the processes of cohesion and DNA replication to ensure that only sister chromatids become paired together. Required for the interaction between Scc1/vtd and SMC3, possibly by mediating N-terminal acetylation of Scc1/vtd. Functionally, (Microbial infection) Required for optimal replication of E.chaffeensis in the immune tissues, hemocytes, and fat body. In Drosophila melanogaster (Fruit fly), this protein is Probable N-acetyltransferase san (san).